Consider the following 183-residue polypeptide: Adenine phosphoribosyltransferase (183 aa).

Belongs to the purine/pyrimidine phosphoribosyltransferase family. As to quaternary structure, homodimer.

Its subcellular location is the cytoplasm. It carries out the reaction AMP + diphosphate = 5-phospho-alpha-D-ribose 1-diphosphate + adenine. It functions in the pathway purine metabolism; AMP biosynthesis via salvage pathway; AMP from adenine: step 1/1. In terms of biological role, catalyzes a salvage reaction resulting in the formation of AMP, that is energically less costly than de novo synthesis. The chain is Adenine phosphoribosyltransferase from Blochmanniella floridana.